Reading from the N-terminus, the 1054-residue chain is Leucine-rich repeats and immunoglobulin-like domains protein 2 (1054 aa).

Residues 1 to 39 form the signal peptide; sequence MAAAPRGIWEQRRLGCGLGPLARLLILAQALRLLPAARA. An LRRNT domain is found at 40–74; sequence GLCPAPCACRLPLLDCSRRKLPAPSWRALSGPLPS. 15 LRR repeats span residues 75–96, 97–118, 120–141, 144–165, 167–188, 192–213, 215–236, 239–260, 263–284, 287–308, 311–332, 335–356, 359–381, 386–407, and 410–431; these read DISSLDLSHNRLSNWNNTLESQ, TLQEVKMNYNELTEIPYFGEPT, NITLLSLVHNLIPEINAEAFEL, ALESLDLSSNIISEIKTSSFPR, SLKYLNLSNNRISTLEAGCFDN, SLLVVKLNRNRISMIPPKVFKL, HLQFLELKRNRIKIVEGLTFQG, SLRSLKMQRNGISKLKDGAFFG, NMEELELEHNNLTGVNKGWLYG, MLQQLYMSQNAIEKISPDAWEF, RLSELDLSYNQLTRLDESAFVG, LLERLNLGDNRVTHIADGVFRF, NLQTLDLRNNDISWAIEDASEAF, SLTKLILQGNRIKSVTQKAFIG, and SLEYLDLNNNAIMSIQENAFSQ. A glycan (N-linked (GlcNAc...) asparagine) is linked at Asn90. Asn120 carries N-linked (GlcNAc...) asparagine glycosylation. N-linked (GlcNAc...) asparagine glycans are attached at residues Asn172 and Asn188. N-linked (GlcNAc...) asparagine glycosylation is present at Asn273. Residues Asn440, Asn467, Asn513, Asn570, and Asn588 are each glycosylated (N-linked (GlcNAc...) asparagine). The region spanning 442-493 is the LRRCT domain; it reads SSLLCDCHLKWLLQWLVDNNFHHSVNVSCAHPEWLAGQSILNVDLKDFVCDD. 3 Ig-like C2-type domains span residues 497 to 596, 601 to 690, and 695 to 784; these read PQIR…AKLT, PSFL…ASLT, and PSFI…NVIS. The cysteines at positions 518 and 579 are disulfide-linked. Cysteines 622 and 674 form a disulfide. N-linked (GlcNAc...) asparagine glycosylation is found at Asn686 and Asn727. Cysteines 716 and 765 form a disulfide. Residues 807–827 form a helical membrane-spanning segment; that stretch reads IVIIVVVCCVVGTSLIWVIVI. The residue at position 905 (Tyr905) is a Phosphotyrosine. N-linked (GlcNAc...) asparagine glycosylation occurs at Asn1024.

It is found in the cell membrane. It localises to the cytoplasm. The sequence is that of Leucine-rich repeats and immunoglobulin-like domains protein 2 (Lrig2) from Mus musculus (Mouse).